The chain runs to 341 residues: HTH-type transcriptional repressor PurR (341 aa).

The HTH lacI-type domain maps to 2-56; that stretch reads ATIKDVAKHAGVSTTTVSHVINKTRFVAENTKAAVWAAIKELHYSPSAVARSLKV. Residues 4-23 constitute a DNA-binding region (H-T-H motif); that stretch reads IKDVAKHAGVSTTTVSHVIN. Residues 48-56 mediate DNA binding; sequence SAVARSLKV. Residues tyrosine 73, arginine 190, threonine 192, and aspartate 275 each contribute to the hypoxanthine site.

As to quaternary structure, homodimer.

Its pathway is purine metabolism; purine nucleotide biosynthesis [regulation]. Its function is as follows. Is the main repressor of the genes involved in the de novo synthesis of purine nucleotides, regulating purB, purC, purEK, purF, purHD, purL, purMN and guaBA expression. PurR is allosterically activated to bind its cognate DNA by binding the purine corepressors, hypoxanthine or guanine, thereby effecting transcription repression. This chain is HTH-type transcriptional repressor PurR, found in Yersinia pestis bv. Antiqua (strain Antiqua).